Consider the following 319-residue polypeptide: Protease HtpX homolog (319 aa).

A run of 2 helical transmembrane segments spans residues L3 to L23 and T32 to F52. H134 is a Zn(2+) binding site. Residue E135 is part of the active site. H138 serves as a coordination point for Zn(2+). 2 consecutive transmembrane segments (helical) span residues V146–W166 and M182–V202. E210 is a binding site for Zn(2+).

This sequence belongs to the peptidase M48B family. Requires Zn(2+) as cofactor.

Its subcellular location is the cell membrane. The polypeptide is Protease HtpX homolog (Aeropyrum pernix (strain ATCC 700893 / DSM 11879 / JCM 9820 / NBRC 100138 / K1)).